The chain runs to 65 residues: Large ribosomal subunit protein bL33c (65 aa).

The protein belongs to the bacterial ribosomal protein bL33 family.

It is found in the plastid. Its subcellular location is the chloroplast. This is Large ribosomal subunit protein bL33c from Staurastrum punctulatum (Green alga).